Consider the following 228-residue polypeptide: Small ribosomal subunit protein uS3 (228 aa).

The 69-residue stretch at 39-107 (VREYLQDKLK…PVHINIEEIR (69 aa)) folds into the KH type-2 domain.

Belongs to the universal ribosomal protein uS3 family. As to quaternary structure, part of the 30S ribosomal subunit. Forms a tight complex with proteins S10 and S14.

Its function is as follows. Binds the lower part of the 30S subunit head. Binds mRNA in the 70S ribosome, positioning it for translation. This chain is Small ribosomal subunit protein uS3, found in Pseudomonas aeruginosa (strain UCBPP-PA14).